Reading from the N-terminus, the 488-residue chain is HSPB1-associated protein 1 (488 aa).

Residues 88-208 form an interaction with HSPB1 region; sequence ETTCNYVEAT…EDTPFLYPTR (121 aa). One can recognise a JmjC domain in the interval 124–288; the sequence is WAYADYKYFV…HLARVEEAIT (165 aa). The segment covering 369–379 has biased composition (polar residues); that stretch reads QTGSQNLTTGT. The disordered stretch occupies residues 369–415; it reads QTGSQNLTTGTDKPEAASPFGPDLVPVAQRSEEPPSERGGIFGSDGK.

As to quaternary structure, interacts with CRYAB and HSPB1. In terms of tissue distribution, widely expressed.

Its subcellular location is the cytoplasm. Functionally, may play a role in cellular stress response. The polypeptide is HSPB1-associated protein 1 (HSPBAP1) (Homo sapiens (Human)).